The sequence spans 847 residues: Follistatin-related protein 5 (847 aa).

The N-terminal stretch at 1 to 20 (MFRCWSAILILGFIFLASEG) is a signal peptide. The Kazal-like domain maps to 81-135 (ETRHAECACMDLCKQHYKPVCGSDGEFYENHCEVHRAACLKKQKITIVHNEDCFF). 3 disulfide bridges follow: Cys87-Cys119, Cys93-Cys112, and Cys101-Cys133. 2 consecutive EF-hand domains span residues 175–210 (RKKP…EELN) and 211–246 (KDLS…QVIQ). Ca(2+)-binding residues include Asp188, Asp190, Asn192, Glu199, Asp226, Asn228, Asp230, His232, and Glu237. Ig-like domains follow at residues 250–338 (PEDQ…FQVN) and 341–426 (PVIR…EDIS). 2 cysteine pairs are disulfide-bonded: Cys270–Cys321 and Cys362–Cys413. Asn318 and Asn394 each carry an N-linked (GlcNAc...) asparagine glycan.

It localises to the secreted. The protein is Follistatin-related protein 5 (Fstl5) of Mus musculus (Mouse).